The primary structure comprises 307 residues: Glycerol-3-phosphate dehydrogenase [NAD(P)+] (307 aa).

Residues tryptophan 14, arginine 34, arginine 35, and lysine 82 each contribute to the NADPH site. Sn-glycerol 3-phosphate-binding residues include lysine 82 and glycine 110. Serine 114 serves as a coordination point for NADPH. The sn-glycerol 3-phosphate site is built by lysine 165, aspartate 218, serine 228, arginine 229, and asparagine 230. Lysine 165 functions as the Proton acceptor in the catalytic mechanism. Arginine 229 contributes to the NADPH binding site. Glutamate 255 is a binding site for NADPH.

It belongs to the NAD-dependent glycerol-3-phosphate dehydrogenase family.

It is found in the cytoplasm. It catalyses the reaction sn-glycerol 3-phosphate + NAD(+) = dihydroxyacetone phosphate + NADH + H(+). It carries out the reaction sn-glycerol 3-phosphate + NADP(+) = dihydroxyacetone phosphate + NADPH + H(+). It functions in the pathway membrane lipid metabolism; glycerophospholipid metabolism. Its function is as follows. Catalyzes the reduction of the glycolytic intermediate dihydroxyacetone phosphate (DHAP) to sn-glycerol 3-phosphate (G3P), the key precursor for phospholipid synthesis. This Trichormus variabilis (strain ATCC 29413 / PCC 7937) (Anabaena variabilis) protein is Glycerol-3-phosphate dehydrogenase [NAD(P)+].